Here is a 681-residue protein sequence, read N- to C-terminus: Angiomotin-like 2b (681 aa).

Low complexity predominate over residues 68-84; it reads GGGAASSSQSSSESLSQ. A disordered region spans residues 68–106; that stretch reads GGGAASSSQSSSESLSQDEPHSPQLSTRQEPQGQEHQVD. Positions 90 to 102 are enriched in polar residues; that stretch reads PQLSTRQEPQGQE. Tyr-126 carries the post-translational modification Phosphotyrosine; by FGFR1. 3 coiled-coil regions span residues 268 to 319, 362 to 441, and 481 to 508; these read NACS…LMKG, IEKL…LQAT, and VYTL…WEQK. The disordered stretch occupies residues 589–618; sequence QLGALQPATADSSIISSHSTPAHTAQGKER. Residues 597-611 show a composition bias toward polar residues; sequence TADSSIISSHSTPAH. A PDZ-binding motif is present at residues 678–681; sequence EIFI.

The protein belongs to the angiomotin family. In terms of assembly, interacts with SRC. In terms of processing, phosphorylation at Tyr-126 is necessary for efficient binding to SRC and synergistically functioning with SRC to activate the downstream MAPK pathway. In terms of tissue distribution, expressed in endothelial cells.

It is found in the recycling endosome. The protein resides in the cytoplasm. Its subcellular location is the cell projection. The protein localises to the podosome. It localises to the cell junction. Its function is as follows. Required for proper architecture of actin filaments and for cell movements during embryogenesis. Plays a role in the radial actin fiber architecture in skin epithelial cells, thereby maintains cell geometry, size and cell interconnectivity within the skin. Plays an important role in coupling actin fibers to cell junctions in endothelial cells and is therefore required for correct endothelial cell morphology and maintenance of dorsal aorta lumen expansion during embryogenesis. May further play a role in the polarity, proliferation and migration of endothelial cells, and therefore participates in angiogenesis. May regulate the translocation of phosphorylated SRC to peripheral cell-matrix adhesion sites. This Danio rerio (Zebrafish) protein is Angiomotin-like 2b.